A 470-amino-acid polypeptide reads, in one-letter code: Flavin-containing monooxygenase FMO GS-OX-like 6 (470 aa).

17–22 (GAGAAG) contributes to the FAD binding site. 214–219 (GYQSSG) provides a ligand contact to NADP(+).

Belongs to the FMO family. The cofactor is FAD.

In terms of biological role, catalyzes the conversion of methylthioalkyl glucosinolates of any chain length into methylsulfinylalkyl glucosinolates. The polypeptide is Flavin-containing monooxygenase FMO GS-OX-like 6 (Arabidopsis thaliana (Mouse-ear cress)).